Reading from the N-terminus, the 229-residue chain is Orotate phosphoribosyltransferase (229 aa).

Residues arginine 107, lysine 108, lysine 111, histidine 113, and 133 to 141 each bind 5-phospho-alpha-D-ribose 1-diphosphate; that span reads EDLTTAGGS. Position 137 (threonine 137) interacts with orotate.

The protein belongs to the purine/pyrimidine phosphoribosyltransferase family. PyrE subfamily. Homodimer. Requires Mg(2+) as cofactor.

The catalysed reaction is orotidine 5'-phosphate + diphosphate = orotate + 5-phospho-alpha-D-ribose 1-diphosphate. It participates in pyrimidine metabolism; UMP biosynthesis via de novo pathway; UMP from orotate: step 1/2. Catalyzes the transfer of a ribosyl phosphate group from 5-phosphoribose 1-diphosphate to orotate, leading to the formation of orotidine monophosphate (OMP). The polypeptide is Orotate phosphoribosyltransferase (Rhizobium johnstonii (strain DSM 114642 / LMG 32736 / 3841) (Rhizobium leguminosarum bv. viciae)).